The following is a 291-amino-acid chain: Phosphatidylcholine-sterol acyltransferase (291 aa).

The N-linked (GlcNAc...) asparagine glycan is linked to N28. The active-site Nucleophile is the S125. N179 carries an N-linked (GlcNAc...) asparagine glycan. An intrachain disulfide couples C220 to C263. The Charge relay system role is filled by D252. N-linked (GlcNAc...) asparagine glycosylation is present at N280.

It belongs to the AB hydrolase superfamily. Lipase family.

It is found in the secreted. It catalyses the reaction a sterol + a 1,2-diacyl-sn-glycero-3-phosphocholine = a sterol ester + a 1-acyl-sn-glycero-3-phosphocholine. Its activity is regulated as follows. APOA1 is the most potent activator in plasma. Also activated by APOE, APOC1 and APOA4. Functionally, central enzyme in the extracellular metabolism of plasma lipoproteins. Synthesized mainly in the liver and secreted into plasma where it converts cholesterol and phosphatidylcholines (lecithins) to cholesteryl esters and lysophosphatidylcholines on the surface of high and low density lipoproteins (HDLs and LDLs). The cholesterol ester is then transported back to the liver. Has a preference for plasma 16:0-18:2 or 18:O-18:2 phosphatidylcholines. Also produced in the brain by primary astrocytes, and esterifies free cholesterol on nascent APOE-containing lipoproteins secreted from glia and influences cerebral spinal fluid (CSF) APOE- and APOA1 levels. Together with APOE and the cholesterol transporter ABCA1, plays a key role in the maturation of glial-derived, nascent lipoproteins. Required for remodeling high-density lipoprotein particles into their spherical forms. The protein is Phosphatidylcholine-sterol acyltransferase (LCAT) of Myodes glareolus (Bank vole).